Here is a 194-residue protein sequence, read N- to C-terminus: UPF0215 protein TV0037 (194 aa).

This sequence belongs to the UPF0215 family.

The protein is UPF0215 protein TV0037 of Thermoplasma volcanium (strain ATCC 51530 / DSM 4299 / JCM 9571 / NBRC 15438 / GSS1).